A 571-amino-acid chain; its full sequence is FAD-linked oxidoreductase patO (571 aa).

The N-terminal stretch at 1-23 is a signal peptide; it reads MRLHQSPPRLLVCILSVLQVSAG. N-linked (GlcNAc...) asparagine glycosylation is found at Asn47, Asn101, Asn125, Asn179, Asn341, Asn374, Asn380, Asn421, Asn445, and Asn480. The FAD-binding PCMH-type domain maps to 115-294; sequence TLGAMVRYAV…YAVTVKTFPD (180 aa).

This sequence belongs to the oxygen-dependent FAD-linked oxidoreductase family. It depends on FAD as a cofactor.

Its subcellular location is the vacuole lumen. It participates in mycotoxin biosynthesis; patulin biosynthesis. FAD-linked oxidoreductase; part of the gene cluster that mediates the biosynthesis of patulin, an acetate-derived tetraketide mycotoxin produced by several fungal species that shows antimicrobial properties against several bacteria. PatO acts with patJ in the vacuole to convert gentisyl alcohol to isoepoxydon. The pathway begins with the synthesis of 6-methylsalicylic acid by the polyketide synthase (PKS) patK via condensation of acetate and malonate units. The 6-methylsalicylic acid decarboxylase patG then catalyzes the decarboxylation of 6-methylsalicylic acid to yield m-cresol (also known as 3-methylphenol). These first reactions occur in the cytosol. The intermediate m-cresol is then transported into the endoplasmic reticulum where the cytochrome P450 monooxygenase patH converts it to m-hydroxybenzyl alcohol, which is further converted to gentisyl alcohol by the cytochrome P450 monooxygenase patI. The oxidoreductases patJ and patO further convert gentisyl alcohol to isoepoxydon in the vacuole. PatN catalyzes then the transformation of isoepoxydon into phyllostine. The cluster protein patF is responsible for the conversion from phyllostine to neopatulin whereas the alcohol dehydrogenase patD converts neopatulin to E-ascladiol. The steps between isoepoxydon and E-ascladiol occur in the cytosol, and E-ascladiol is probably secreted to the extracellular space by one of the cluster-specific transporters patC or patM. Finally, the secreted patulin synthase patE catalyzes the conversion of E-ascladiol to patulin. This is FAD-linked oxidoreductase patO from Penicillium expansum (Blue mold rot fungus).